A 356-amino-acid chain; its full sequence is Protein-arginine kinase (356 aa).

The Phosphagen kinase C-terminal domain maps to 24-254 (IVLSSRIRLA…MQLIQQERAA (231 aa)). ATP is bound by residues 27 to 31 (SSRIR), histidine 91, arginine 125, 176 to 180 (RASVM), and 207 to 212 (RGIYGE). Positions 337–342 (RDERRA) match the RDXXRA motif of the pArg binding pocket involved in allosteric regulation motif.

This sequence belongs to the ATP:guanido phosphotransferase family.

It catalyses the reaction L-arginyl-[protein] + ATP = N(omega)-phospho-L-arginyl-[protein] + ADP + H(+). Appears to be allosterically activated by the binding of pArg-containing polypeptides to the pArg-binding pocket localized in the C-terminal domain of McsB. In terms of biological role, catalyzes the specific phosphorylation of arginine residues in a large number of proteins. Is part of the bacterial stress response system. Protein arginine phosphorylation has a physiologically important role and is involved in the regulation of many critical cellular processes, such as protein homeostasis, motility, competence, and stringent and stress responses, by regulating gene expression and protein activity. This is Protein-arginine kinase from Halalkalibacterium halodurans (strain ATCC BAA-125 / DSM 18197 / FERM 7344 / JCM 9153 / C-125) (Bacillus halodurans).